Consider the following 233-residue polypeptide: Ribonuclease 3 (233 aa).

Positions 8–135 constitute an RNase III domain; sequence AQRFLEDKQL…VIGAIYLDQG (128 aa). Residue Glu-48 coordinates Mg(2+). Asp-52 is an active-site residue. Mg(2+) contacts are provided by Asp-121 and Glu-124. Glu-124 is a catalytic residue. The DRBM domain maps to 161 to 230; sequence DYKSKLQELV…AQKVLQDNLV (70 aa).

The protein belongs to the ribonuclease III family. In terms of assembly, homodimer. Mg(2+) serves as cofactor.

It is found in the cytoplasm. The catalysed reaction is Endonucleolytic cleavage to 5'-phosphomonoester.. In terms of biological role, digests double-stranded RNA. Involved in the processing of primary rRNA transcript to yield the immediate precursors to the large and small rRNAs (23S and 16S). Processes some mRNAs, and tRNAs when they are encoded in the rRNA operon. Processes pre-crRNA and tracrRNA of type II CRISPR loci if present in the organism. The protein is Ribonuclease 3 of Syntrophomonas wolfei subsp. wolfei (strain DSM 2245B / Goettingen).